A 62-amino-acid chain; its full sequence is Small ribosomal subunit protein bS21 (62 aa).

Residues 43–52 (VKKKLKSEAA) show a composition bias toward basic and acidic residues. Positions 43–62 (VKKKLKSEAARKRKAKKKRF) are disordered. A compositionally biased stretch (basic residues) spans 53–62 (RKRKAKKKRF).

The protein belongs to the bacterial ribosomal protein bS21 family.

The protein is Small ribosomal subunit protein bS21 of Levilactobacillus brevis (strain ATCC 367 / BCRC 12310 / CIP 105137 / JCM 1170 / LMG 11437 / NCIMB 947 / NCTC 947) (Lactobacillus brevis).